Consider the following 425-residue polypeptide: Dihydroorotase (425 aa).

The Zn(2+) site is built by His61 and His63. Residues His63 to Arg65 and Asn95 each bind substrate. The Zn(2+) site is built by Asp153, His180, and His233. A substrate-binding site is contributed by Asn279. Asp306 serves as a coordination point for Zn(2+). The active site involves Asp306. Substrate is bound at residue His310.

Belongs to the metallo-dependent hydrolases superfamily. DHOase family. Class I DHOase subfamily. Requires Zn(2+) as cofactor.

The catalysed reaction is (S)-dihydroorotate + H2O = N-carbamoyl-L-aspartate + H(+). It functions in the pathway pyrimidine metabolism; UMP biosynthesis via de novo pathway; (S)-dihydroorotate from bicarbonate: step 3/3. Functionally, catalyzes the reversible cyclization of carbamoyl aspartate to dihydroorotate. In Trichlorobacter lovleyi (strain ATCC BAA-1151 / DSM 17278 / SZ) (Geobacter lovleyi), this protein is Dihydroorotase.